Here is a 73-residue protein sequence, read N- to C-terminus: uncharacterized protein (73 aa).

This is an uncharacterized protein from Human cytomegalovirus (strain AD169) (HHV-5).